The sequence spans 454 residues: Bifunctional protein GlmU (454 aa).

A pyrophosphorylase region spans residues 1 to 232; the sequence is MTDRTCLSIV…VDNVIGINNR (232 aa). UDP-N-acetyl-alpha-D-glucosamine contacts are provided by residues 11-14, K25, Q78, and 83-84; these read LAAG and GT. Residue D108 coordinates Mg(2+). UDP-N-acetyl-alpha-D-glucosamine is bound by residues G144, E158, N173, and N230. Residue N230 coordinates Mg(2+). Positions 233 to 253 are linker; that stretch reads AELAEAETIWQNRKRRELMLS. Residues 254-454 form an N-acetyltransferase region; that stretch reads GVTLIAPETV…AIKAAKSVSK (201 aa). UDP-N-acetyl-alpha-D-glucosamine is bound by residues R319 and K337. The active-site Proton acceptor is the H349. UDP-N-acetyl-alpha-D-glucosamine contacts are provided by Y352 and N363. Residues A366, 372 to 373, S391, S409, and R426 contribute to the acetyl-CoA site; that span reads NY.

It in the N-terminal section; belongs to the N-acetylglucosamine-1-phosphate uridyltransferase family. The protein in the C-terminal section; belongs to the transferase hexapeptide repeat family. Homotrimer. It depends on Mg(2+) as a cofactor.

The protein resides in the cytoplasm. The catalysed reaction is alpha-D-glucosamine 1-phosphate + acetyl-CoA = N-acetyl-alpha-D-glucosamine 1-phosphate + CoA + H(+). It carries out the reaction N-acetyl-alpha-D-glucosamine 1-phosphate + UTP + H(+) = UDP-N-acetyl-alpha-D-glucosamine + diphosphate. Its pathway is nucleotide-sugar biosynthesis; UDP-N-acetyl-alpha-D-glucosamine biosynthesis; N-acetyl-alpha-D-glucosamine 1-phosphate from alpha-D-glucosamine 6-phosphate (route II): step 2/2. It functions in the pathway nucleotide-sugar biosynthesis; UDP-N-acetyl-alpha-D-glucosamine biosynthesis; UDP-N-acetyl-alpha-D-glucosamine from N-acetyl-alpha-D-glucosamine 1-phosphate: step 1/1. It participates in bacterial outer membrane biogenesis; LPS lipid A biosynthesis. In terms of biological role, catalyzes the last two sequential reactions in the de novo biosynthetic pathway for UDP-N-acetylglucosamine (UDP-GlcNAc). The C-terminal domain catalyzes the transfer of acetyl group from acetyl coenzyme A to glucosamine-1-phosphate (GlcN-1-P) to produce N-acetylglucosamine-1-phosphate (GlcNAc-1-P), which is converted into UDP-GlcNAc by the transfer of uridine 5-monophosphate (from uridine 5-triphosphate), a reaction catalyzed by the N-terminal domain. In Brucella canis (strain ATCC 23365 / NCTC 10854 / RM-666), this protein is Bifunctional protein GlmU.